The sequence spans 175 residues: NADH-ubiquinone oxidoreductase chain 6 (175 aa).

5 consecutive transmembrane segments (helical) span residues 1–21, 25–45, 47–67, 88–108, and 149–169; these read MMTYIVFILSVIFVIGFVGFS, SPIYGGLVLIVSGGVGCGIIM, FGGSFLGLMVFLIYLGGMLVV, TVMGVFLLGLLMEVMLVLYVL, and YGAWVVVVTGWSLLVGVLVIL.

This sequence belongs to the complex I subunit 6 family. Core subunit of respiratory chain NADH dehydrogenase (Complex I) which is composed of 45 different subunits.

It localises to the mitochondrion inner membrane. It carries out the reaction a ubiquinone + NADH + 5 H(+)(in) = a ubiquinol + NAD(+) + 4 H(+)(out). Its function is as follows. Core subunit of the mitochondrial membrane respiratory chain NADH dehydrogenase (Complex I) which catalyzes electron transfer from NADH through the respiratory chain, using ubiquinone as an electron acceptor. Essential for the catalytic activity and assembly of complex I. This is NADH-ubiquinone oxidoreductase chain 6 (MT-ND6) from Equus asinus (Donkey).